The chain runs to 420 residues: Protein disulfide isomerase CRELD1 (420 aa).

The N-terminal stretch at M1 to V29 is a signal peptide. The Extracellular portion of the chain corresponds to Q30–E362. The short motif at C46–C49 is the CXXC element. Cystine bridges form between C46–C49, C155–C169, C163–C181, and C183–C192. Positions L153 to G193 constitute an EGF-like 1 domain. An N-linked (GlcNAc...) asparagine glycan is attached at N205. FU repeat units lie at residues H208 to S255 and S268 to P315. Positions C278–C281 match the CXXC motif. 4 cysteine pairs are disulfide-bonded: C278-C281, C309-C321, C314-C330, and C332-C343. One can recognise an EGF-like 2; calcium-binding domain in the interval D305–V344. Residues L363–A383 form a helical membrane-spanning segment. Residue K384 is a topological domain, cytoplasmic. The chain crosses the membrane as a helical span at residues G385–L405. The Extracellular segment spans residues S406–R420.

This sequence belongs to the CRELD family.

Its subcellular location is the membrane. It catalyses the reaction Catalyzes the rearrangement of -S-S- bonds in proteins.. In terms of biological role, protein disulfide isomerase. Promotes the localization of acetylcholine receptors (AChRs) to the plasma membrane. The protein is Protein disulfide isomerase CRELD1 (CRELD1) of Bos taurus (Bovine).